The sequence spans 178 residues: Aminoglycoside 2'-N-acetyltransferase (178 aa).

An N-acetyltransferase domain is found at 8 to 171; that stretch reads LHTSQLTLSE…VDFTASLYCD (164 aa). Substrate-binding positions include Asp32 and 79–80; that span reads EA. CoA is bound by residues 81–83 and 88–93; these read MVV and RRQGIG. Substrate is bound by residues Ser114 and 148–149; that span reads EE.

This sequence belongs to the AAC(2')-I acetyltransferase family. In terms of assembly, homodimer.

It catalyses the reaction gentamicin C1a + acetyl-CoA = N(2')-acetylgentamicin C1a + CoA + H(+). Functionally, catalyzes the coenzyme A-dependent acetylation of the 2' hydroxyl or amino group of a broad spectrum of aminoglycosides. It confers resistance to aminoglycosides. The protein is Aminoglycoside 2'-N-acetyltransferase (aac) of Providencia stuartii.